A 259-amino-acid polypeptide reads, in one-letter code: Type III pantothenate kinase (259 aa).

Aspartate 6–valine 13 is a binding site for ATP. A substrate-binding site is contributed by glycine 107 to arginine 110. The Proton acceptor role is filled by aspartate 109. Position 129 (aspartate 129) interacts with K(+). Threonine 132 contributes to the ATP binding site. Threonine 184 is a substrate binding site.

It belongs to the type III pantothenate kinase family. Homodimer. The cofactor is NH4(+). It depends on K(+) as a cofactor.

It is found in the cytoplasm. It catalyses the reaction (R)-pantothenate + ATP = (R)-4'-phosphopantothenate + ADP + H(+). It functions in the pathway cofactor biosynthesis; coenzyme A biosynthesis; CoA from (R)-pantothenate: step 1/5. Catalyzes the phosphorylation of pantothenate (Pan), the first step in CoA biosynthesis. The chain is Type III pantothenate kinase from Jannaschia sp. (strain CCS1).